The sequence spans 368 residues: uncharacterized protein (368 aa).

Positions 3-120 constitute a Response regulatory domain; that stretch reads KILLADDERI…QIISSLEEII (118 aa). Aspartate 55 is subject to 4-aspartylphosphate. Positions 259–361 constitute an HTH araC/xylS-type domain; it reads SKMIRLIADE…GLTPSEFRRK (103 aa). 2 DNA-binding regions (H-T-H motif) span residues 278-299 and 327-351; these read WAAK…KQET and VSEI…KKYT.

In terms of processing, phosphorylated by YesM.

The protein localises to the cytoplasm. Functionally, member of the two-component regulatory system YesM/YesN. This is an uncharacterized protein from Bacillus subtilis (strain 168).